The chain runs to 826 residues: E3 ubiquitin-protein ligase SH3RF1 (826 aa).

Residues 12-53 (CPVCLERLDASAKVLPCQHTFCKRCLLGIVSSRKELRCPECR) form an RING-type zinc finger. Positions 80–130 (PRKAGDGGSAGNSTNALRAQGSVTTNGGLNDAQNTQSGQQRIQARSPPVRG) are disordered. The segment covering 90–122 (GNSTNALRAQGSVTTNGGLNDAQNTQSGQQRIQ) has biased composition (polar residues). SH3 domains are found at residues 132–191 (PQLP…IIKP) and 194–257 (QPPP…FNSA). Positions 266-319 (KPSGADTGEGSSGTSHSGNSQKQADAKKNTKKRHSFTSLTMSNKSSQSVQNRHS) are disordered. Residues 273–285 (GEGSSGTSHSGNS) are compositionally biased toward low complexity. Positions 301-317 (FTSLTMSNKSSQSVQNR) are enriched in polar residues. Residues 398-459 (ARPSVFIAIY…PGNYVAPVTR (62 aa)) enclose the SH3 3 domain. Disordered regions lie at residues 647-694 (NSAA…QTNS) and 725-759 (DSVS…CSSL). Residues 652–663 (KQDKDSKKEKKG) are compositionally biased toward basic and acidic residues. Residues 767–826 (RPCERYRVMVSYPPQSEAELELKEGDIVFVHKKREDGWFKGTLQRNGKTGLFPGSFVENI) enclose the SH3 4 domain.

This sequence belongs to the SH3RF family. Post-translationally, autoubiquitinated. Ubiquitinated by SH3RF2, leading to proteasome-mediated degradation.

The protein localises to the cytoplasm. It is found in the perinuclear region. Its subcellular location is the cell projection. The protein resides in the lamellipodium. It localises to the golgi apparatus. The protein localises to the trans-Golgi network. It catalyses the reaction S-ubiquitinyl-[E2 ubiquitin-conjugating enzyme]-L-cysteine + [acceptor protein]-L-lysine = [E2 ubiquitin-conjugating enzyme]-L-cysteine + N(6)-ubiquitinyl-[acceptor protein]-L-lysine.. It participates in protein modification; protein ubiquitination. Its function is as follows. Has E3 ubiquitin-protein ligase activity. In the absence of an external substrate, it can catalyze self-ubiquitination. Acts as a scaffold protein that contributes to the effective activation of the JNK signaling pathway. Plays an essential role in the anterior neural development. The chain is E3 ubiquitin-protein ligase SH3RF1 (sh3rf1) from Xenopus laevis (African clawed frog).